Consider the following 281-residue polypeptide: Secretory carrier-associated membrane protein 5 (281 aa).

The disordered stretch occupies residues 1–49 (MHHDPNPFDEGADDNPFSNGGGGGARRGGGGGGGGGGGGGKSQFSFGFG). Over 1-139 (MHHDPNPFDE…AQKLQYLAFA (139 aa)) the chain is Cytoplasmic. Over residues 19-49 (NGGGGGARRGGGGGGGGGGGGGKSQFSFGFG) the composition is skewed to gly residues. Residues 76-102 (KELLQWEADLKRREADIRRREEALKSA) adopt a coiled-coil conformation. Transmembrane regions (helical) follow at residues 140–160 (SWLGIVLCLFWNFIAVIVCWI), 167–187 (LFFLATIYGMLGMPLSYLMWY), 202–222 (FGWFFLCYMLHIAFCVFAAIA), and 250–270 (IFYFVGFALFCLETLVSIWVL). Over 271–281 (QKVYMYFRGHK) the chain is Cytoplasmic.

Belongs to the SCAMP family.

The protein resides in the cell membrane. It is found in the cytoplasmic vesicle. Its subcellular location is the secretory vesicle membrane. In terms of biological role, probably involved in membrane trafficking. The protein is Secretory carrier-associated membrane protein 5 (SCAMP5) of Oryza sativa subsp. japonica (Rice).